A 118-amino-acid chain; its full sequence is Large ribosomal subunit protein uL18 (118 aa).

Belongs to the universal ribosomal protein uL18 family. Part of the 50S ribosomal subunit; part of the 5S rRNA/L5/L18/L25 subcomplex. Contacts the 5S and 23S rRNAs.

Its function is as follows. This is one of the proteins that bind and probably mediate the attachment of the 5S RNA into the large ribosomal subunit, where it forms part of the central protuberance. This is Large ribosomal subunit protein uL18 from Lactobacillus acidophilus (strain ATCC 700396 / NCK56 / N2 / NCFM).